We begin with the raw amino-acid sequence, 423 residues long: UPF0229 protein Pfl01_5140 (423 aa).

The segment at 83–108 (TAGEHIARPPGGGGGRGPGKAGNSGE) is disordered. A compositionally biased stretch (gly residues) spans 92-107 (PGGGGGRGPGKAGNSG).

The protein belongs to the UPF0229 family.

The chain is UPF0229 protein Pfl01_5140 from Pseudomonas fluorescens (strain Pf0-1).